The primary structure comprises 556 residues: Oxygen-dependent choline dehydrogenase (556 aa).

4-33 (DYIIIGAGSAGNVLATRLTEDPNTTVLLLE) contributes to the FAD binding site. Residue H473 is the Proton acceptor of the active site.

The protein belongs to the GMC oxidoreductase family. FAD is required as a cofactor.

It carries out the reaction choline + A = betaine aldehyde + AH2. It catalyses the reaction betaine aldehyde + NAD(+) + H2O = glycine betaine + NADH + 2 H(+). Its pathway is amine and polyamine biosynthesis; betaine biosynthesis via choline pathway; betaine aldehyde from choline (cytochrome c reductase route): step 1/1. Functionally, involved in the biosynthesis of the osmoprotectant glycine betaine. Catalyzes the oxidation of choline to betaine aldehyde and betaine aldehyde to glycine betaine at the same rate. This Escherichia coli O17:K52:H18 (strain UMN026 / ExPEC) protein is Oxygen-dependent choline dehydrogenase.